The chain runs to 372 residues: N-methyl-L-tryptophan oxidase (372 aa).

FAD is bound at residue Asp-4 to His-34. Cys-307 bears the S-8alpha-FAD cysteine mark.

Belongs to the MSOX/MTOX family. MTOX subfamily. As to quaternary structure, monomer. The cofactor is FAD.

The enzyme catalyses N(alpha)-methyl-L-tryptophan + O2 + H2O = L-tryptophan + formaldehyde + H2O2. Functionally, catalyzes the oxidative demethylation of N-methyl-L-tryptophan. The protein is N-methyl-L-tryptophan oxidase of Salmonella heidelberg (strain SL476).